The primary structure comprises 250 residues: NAD(P)H-quinone oxidoreductase subunit K, chloroplastic (250 aa).

Positions 61, 62, 126, and 157 each coordinate [4Fe-4S] cluster.

This sequence belongs to the complex I 20 kDa subunit family. As to quaternary structure, NDH is composed of at least 16 different subunits, 5 of which are encoded in the nucleus. The cofactor is [4Fe-4S] cluster.

Its subcellular location is the plastid. The protein resides in the chloroplast thylakoid membrane. The enzyme catalyses a plastoquinone + NADH + (n+1) H(+)(in) = a plastoquinol + NAD(+) + n H(+)(out). It catalyses the reaction a plastoquinone + NADPH + (n+1) H(+)(in) = a plastoquinol + NADP(+) + n H(+)(out). Its function is as follows. NDH shuttles electrons from NAD(P)H:plastoquinone, via FMN and iron-sulfur (Fe-S) centers, to quinones in the photosynthetic chain and possibly in a chloroplast respiratory chain. The immediate electron acceptor for the enzyme in this species is believed to be plastoquinone. Couples the redox reaction to proton translocation, and thus conserves the redox energy in a proton gradient. The polypeptide is NAD(P)H-quinone oxidoreductase subunit K, chloroplastic (Angiopteris evecta (Mule's foot fern)).